Reading from the N-terminus, the 226-residue chain is ATP synthase subunit a (226 aa).

The next 6 helical transmembrane spans lie at 18–38, 76–96, 105–125, 134–154, 179–199, and 201–221; these read FITGFFVVLTAVLMFLISLGA, YFPLAGTIALYVFFSNMIGII, SWSFTLVLALIVFFYYHFEGI, FAHFAGPVKWLAPFMFPIEII, LIMLLLVPWVIPVAPFMVLFF, and GILQAFVFMILTYVYLAGAVL.

It belongs to the ATPase A chain family. F-type ATPases have 2 components, CF(1) - the catalytic core - and CF(0) - the membrane proton channel. CF(1) has five subunits: alpha(3), beta(3), gamma(1), delta(1), epsilon(1). CF(0) has three main subunits: a(1), b(2) and c(9-12). The alpha and beta chains form an alternating ring which encloses part of the gamma chain. CF(1) is attached to CF(0) by a central stalk formed by the gamma and epsilon chains, while a peripheral stalk is formed by the delta and b chains.

Its subcellular location is the cell inner membrane. Key component of the proton channel; it plays a direct role in the translocation of protons across the membrane. The polypeptide is ATP synthase subunit a (Helicobacter acinonychis (strain Sheeba)).